The following is a 604-amino-acid chain: Membrane protein insertase YidC (604 aa).

The helical transmembrane segment at 8 to 28 (LYLAIGLSLLVLIGWNYFFAG) threads the bilayer. Residues 42–84 (EQQAQTQTTSDTTARSDLNVPGQRSLPGESPQTQLSRPEALAA) are disordered. Residues 43–58 (QQAQTQTTSDTTARSD) show a composition bias toward low complexity. The next 5 membrane-spanning stretches (helical) occupy residues 349–369 (FDLLIDWGYFYFITRPMFWIL), 375–395 (VVGNFGVAILCITVLVKAVFF), 449–469 (LPMLIQIPVFFALYKVLFVTI), 507–527 (MIGHFLAIGIWPLIMGVSMFF), and 546–566 (WMPVIFTFMLGTFPSGLVIYW).

This sequence belongs to the OXA1/ALB3/YidC family. Type 1 subfamily. As to quaternary structure, interacts with the Sec translocase complex via SecD. Specifically interacts with transmembrane segments of nascent integral membrane proteins during membrane integration.

The protein localises to the cell inner membrane. In terms of biological role, required for the insertion and/or proper folding and/or complex formation of integral membrane proteins into the membrane. Involved in integration of membrane proteins that insert both dependently and independently of the Sec translocase complex, as well as at least some lipoproteins. Aids folding of multispanning membrane proteins. The polypeptide is Membrane protein insertase YidC (Beijerinckia indica subsp. indica (strain ATCC 9039 / DSM 1715 / NCIMB 8712)).